Consider the following 164-residue polypeptide: MKLAELSKEEIQELSMVEVAYLVMKETKEPFNYQDLLKKVAELKGMSEEQMLDRIGYLYTDLNIDGRFVTLGDNRWGLRSWYPLEQVEEEITGPTKKKAKAKAEEEVDELDENIEVFDDEFEDLEDELDELAESEDSDEEDEEFDEGDDIDELDDEFEESDDDL.

Residues 14–81 (LSMVEVAYLV…GDNRWGLRSW (68 aa)) enclose the HTH HARE-type domain. The tract at residues 93 to 164 (GPTKKKAKAK…DEFEESDDDL (72 aa)) is disordered. Residues 105–164 (EEVDELDENIEVFDDEFEDLEDELDELAESEDSDEEDEEFDEGDDIDELDDEFEESDDDL) show a composition bias toward acidic residues.

This sequence belongs to the RpoE family. RNAP is composed of a core of 2 alpha, a beta and a beta' subunits. The core is associated with a delta subunit and one of several sigma factors.

Functionally, participates in both the initiation and recycling phases of transcription. In the presence of the delta subunit, RNAP displays an increased specificity of transcription, a decreased affinity for nucleic acids, and an increased efficiency of RNA synthesis because of enhanced recycling. This Halalkalibacterium halodurans (strain ATCC BAA-125 / DSM 18197 / FERM 7344 / JCM 9153 / C-125) (Bacillus halodurans) protein is Probable DNA-directed RNA polymerase subunit delta (rpoE).